The following is a 118-amino-acid chain: Large ribosomal subunit protein uL22 (118 aa).

The protein belongs to the universal ribosomal protein uL22 family. In terms of assembly, part of the 50S ribosomal subunit.

Functionally, this protein binds specifically to 23S rRNA; its binding is stimulated by other ribosomal proteins, e.g. L4, L17, and L20. It is important during the early stages of 50S assembly. It makes multiple contacts with different domains of the 23S rRNA in the assembled 50S subunit and ribosome. Its function is as follows. The globular domain of the protein is located near the polypeptide exit tunnel on the outside of the subunit, while an extended beta-hairpin is found that lines the wall of the exit tunnel in the center of the 70S ribosome. The protein is Large ribosomal subunit protein uL22 of Nostoc punctiforme (strain ATCC 29133 / PCC 73102).